The following is a 456-amino-acid chain: Major facilitator superfamily domain-containing protein 10 (456 aa).

3 helical membrane-spanning segments follow: residues valine 25–proline 45, valine 87–leucine 107, and tyrosine 114–alanine 136. The N-linked (GlcNAc...) asparagine glycan is linked to asparagine 159. 8 helical membrane-spanning segments follow: residues alanine 179–leucine 199, methionine 203–leucine 223, leucine 278–alanine 298, lysine 311–alanine 328, leucine 345–leucine 365, glycine 366–serine 386, serine 403–threonine 423, and glycine 424–tryptophan 444.

Belongs to the major facilitator superfamily. Esxpressed in luminal membrane of renal tubules. Expressed at the surface of eosinophils (at protein level).

The protein resides in the nucleus inner membrane. The protein localises to the cell membrane. Functionally, probable organic anion transporter which may serve as a transporter for some non-steroidal anti-inflammatory drugs (NSAIDs) as well as other organic anions across the luminal membranes of renal proximal tubules at the final excretion step into the urine. This chain is Major facilitator superfamily domain-containing protein 10 (Mfsd10), found in Mus musculus (Mouse).